Here is a 433-residue protein sequence, read N- to C-terminus: O-methyltransferase hasC (433 aa).

S-adenosyl-L-methionine-binding positions include Glu-265 and Gly-293–Phe-295. His-313 serves as the catalytic Proton acceptor. The interval Ser-413–Met-433 is disordered.

This sequence belongs to the class I-like SAM-binding methyltransferase superfamily. Cation-independent O-methyltransferase family. COMT subfamily.

Its pathway is secondary metabolite biosynthesis. Functionally, O-methyltransferase; part of the gene cluster that mediates the biosynthesis of hexadehydro-astechrome (HAS), a tryptophan-derived iron(III)-complex that acts as a virulence factor in infected mice. Within the pathway, hasC, with the cytochrome P450 monooxygenase hasH and the FAD-linked oxidoreductase hasG, convert the hasE-prenylated Trp-Ala-dipeptide into an O-methylated diketopiperazine that is then released from the hasD NRPS. The HAS biosynthesis begins with the synthesis of a tethered Trp-Ala dipeptide by the NRPS hasD. The 7-dimethylallyltryptophan synthase hasE then catalyzes the prenylation of the hasD-tethered tryptophan or the resulting tethered Trp-Ala dipeptide at the C-7 position of the indole moiety. HAS biosynthesis continues via tethered intermediates with the succesive actions of the cytochrome P450 monooxygenase hasH, the O-methyltransferase hasC, and the FAD-linked oxidoreductase hasG. The resulting O-methylated diketopiperazine is then released from hasD. Finally, three O-methylated diketopiperazine molecules assemble in a trimeric complex with Fe(III) to produce hexadehydro-astechrome. The sequence is that of O-methyltransferase hasC from Aspergillus fumigatus (strain CBS 144.89 / FGSC A1163 / CEA10) (Neosartorya fumigata).